The chain runs to 105 residues: Large ribosomal subunit protein uL24 (105 aa).

The protein belongs to the universal ribosomal protein uL24 family. As to quaternary structure, part of the 50S ribosomal subunit.

In terms of biological role, one of two assembly initiator proteins, it binds directly to the 5'-end of the 23S rRNA, where it nucleates assembly of the 50S subunit. Functionally, one of the proteins that surrounds the polypeptide exit tunnel on the outside of the subunit. This is Large ribosomal subunit protein uL24 from Aromatoleum aromaticum (strain DSM 19018 / LMG 30748 / EbN1) (Azoarcus sp. (strain EbN1)).